Consider the following 223-residue polypeptide: Ribosome maturation factor RimM (223 aa).

The segment covering 1–12 has biased composition (low complexity); it reads MARRPGSSSRGP. Disordered regions lie at residues 1–44 and 203–223; these read MARR…DPGL and VADP…DDPG. The region spanning 135-210 is the PRC barrel domain; the sequence is DEDEFFLTDL…KVVADPPDDL (76 aa).

The protein belongs to the RimM family. In terms of assembly, binds ribosomal protein uS19.

It localises to the cytoplasm. In terms of biological role, an accessory protein needed during the final step in the assembly of 30S ribosomal subunit, possibly for assembly of the head region. Essential for efficient processing of 16S rRNA. May be needed both before and after RbfA during the maturation of 16S rRNA. It has affinity for free ribosomal 30S subunits but not for 70S ribosomes. This is Ribosome maturation factor RimM from Methylorubrum extorquens (strain CM4 / NCIMB 13688) (Methylobacterium extorquens).